A 663-amino-acid polypeptide reads, in one-letter code: Bifunctional polymyxin resistance protein ArnA (663 aa).

Residues 1 to 304 are formyltransferase ArnAFT; sequence MKAVVFAYHD…ELGLVAGMRL (304 aa). Histidine 104 functions as the Proton donor; for formyltransferase activity in the catalytic mechanism. (6R)-10-formyltetrahydrofolate is bound by residues arginine 114 and 136 to 140; that span reads TMRPD. A dehydrogenase ArnADH region spans residues 316–663; that stretch reads RLTRVLILGV…GAVSTGVEHD (348 aa). Residues aspartate 349 and 370 to 371 each bind NAD(+); that span reads DI. UDP-alpha-D-glucuronate-binding positions include alanine 395, tyrosine 400, and 434–435; that span reads TS. Glutamate 436 serves as the catalytic Proton acceptor; for decarboxylase activity. UDP-alpha-D-glucuronate-binding positions include arginine 462, asparagine 494, 528–537, and tyrosine 615; that span reads QLVDGGAQKR. The Proton donor; for decarboxylase activity role is filled by arginine 621.

This sequence in the N-terminal section; belongs to the Fmt family. UDP-L-Ara4N formyltransferase subfamily. In the C-terminal section; belongs to the NAD(P)-dependent epimerase/dehydratase family. UDP-glucuronic acid decarboxylase subfamily. In terms of assembly, homohexamer, formed by a dimer of trimers.

It catalyses the reaction UDP-alpha-D-glucuronate + NAD(+) = UDP-beta-L-threo-pentopyranos-4-ulose + CO2 + NADH. The enzyme catalyses UDP-4-amino-4-deoxy-beta-L-arabinose + (6R)-10-formyltetrahydrofolate = UDP-4-deoxy-4-formamido-beta-L-arabinose + (6S)-5,6,7,8-tetrahydrofolate + H(+). It functions in the pathway nucleotide-sugar biosynthesis; UDP-4-deoxy-4-formamido-beta-L-arabinose biosynthesis; UDP-4-deoxy-4-formamido-beta-L-arabinose from UDP-alpha-D-glucuronate: step 1/3. The protein operates within nucleotide-sugar biosynthesis; UDP-4-deoxy-4-formamido-beta-L-arabinose biosynthesis; UDP-4-deoxy-4-formamido-beta-L-arabinose from UDP-alpha-D-glucuronate: step 3/3. It participates in bacterial outer membrane biogenesis; lipopolysaccharide biosynthesis. Its function is as follows. Bifunctional enzyme that catalyzes the oxidative decarboxylation of UDP-glucuronic acid (UDP-GlcUA) to UDP-4-keto-arabinose (UDP-Ara4O) and the addition of a formyl group to UDP-4-amino-4-deoxy-L-arabinose (UDP-L-Ara4N) to form UDP-L-4-formamido-arabinose (UDP-L-Ara4FN). The modified arabinose is attached to lipid A and is required for resistance to polymyxin and cationic antimicrobial peptides. The chain is Bifunctional polymyxin resistance protein ArnA from Aeromonas salmonicida (strain A449).